The sequence spans 243 residues: 1-(5-phosphoribosyl)-5-[(5-phosphoribosylamino)methylideneamino] imidazole-4-carboxamide isomerase (243 aa).

Asp8 serves as the catalytic Proton acceptor. Asp129 serves as the catalytic Proton donor.

Belongs to the HisA/HisF family.

The protein localises to the cytoplasm. It carries out the reaction 1-(5-phospho-beta-D-ribosyl)-5-[(5-phospho-beta-D-ribosylamino)methylideneamino]imidazole-4-carboxamide = 5-[(5-phospho-1-deoxy-D-ribulos-1-ylimino)methylamino]-1-(5-phospho-beta-D-ribosyl)imidazole-4-carboxamide. It functions in the pathway amino-acid biosynthesis; L-histidine biosynthesis; L-histidine from 5-phospho-alpha-D-ribose 1-diphosphate: step 4/9. This is 1-(5-phosphoribosyl)-5-[(5-phosphoribosylamino)methylideneamino] imidazole-4-carboxamide isomerase from Brucella anthropi (strain ATCC 49188 / DSM 6882 / CCUG 24695 / JCM 21032 / LMG 3331 / NBRC 15819 / NCTC 12168 / Alc 37) (Ochrobactrum anthropi).